The primary structure comprises 475 residues: Tryptophan synthase beta chain 2, chloroplastic (475 aa).

Residues 1-21 (MATASTAATFRPSSVSASSEL) show a composition bias toward polar residues. The interval 1–44 (MATASTAATFRPSSVSASSELTHLRSPSKLPKFTPLPSARSRSS) is disordered. The N-terminal 51 residues, 1 to 51 (MATASTAATFRPSSVSASSELTHLRSPSKLPKFTPLPSARSRSSSSFSVSC), are a transit peptide targeting the chloroplast. The residue at position 52 (threonine 52) is an N-acetylthreonine. Residue lysine 170 is modified to N6-(pyridoxal phosphate)lysine.

This sequence belongs to the TrpB family. As to quaternary structure, tetramer of two alpha and two beta chains. It depends on pyridoxal 5'-phosphate as a cofactor.

Its subcellular location is the plastid. It localises to the chloroplast. It carries out the reaction (1S,2R)-1-C-(indol-3-yl)glycerol 3-phosphate + L-serine = D-glyceraldehyde 3-phosphate + L-tryptophan + H2O. It participates in amino-acid biosynthesis; L-tryptophan biosynthesis; L-tryptophan from chorismate: step 5/5. In terms of biological role, the beta subunit is responsible for the synthesis of L-tryptophan from indole and L-serine. This is Tryptophan synthase beta chain 2, chloroplastic (TSB2) from Arabidopsis thaliana (Mouse-ear cress).